A 361-amino-acid chain; its full sequence is Membrane-bound lytic murein transglycosylase B (361 aa).

The first 18 residues, 1–18 (MFKRRYVTLLPLFVLLAA), serve as a signal peptide directing secretion. A lipid anchor (N-palmitoyl cysteine) is attached at Cys19. Residue Cys19 is the site of S-diacylglycerol cysteine attachment. Glu162 is a catalytic residue.

As to quaternary structure, monomer.

The protein resides in the cell outer membrane. It carries out the reaction Exolytic cleavage of the (1-&gt;4)-beta-glycosidic linkage between N-acetylmuramic acid (MurNAc) and N-acetylglucosamine (GlcNAc) residues in peptidoglycan, from either the reducing or the non-reducing ends of the peptidoglycan chains, with concomitant formation of a 1,6-anhydrobond in the MurNAc residue.. Its function is as follows. Murein-degrading enzyme. Catalyzes the cleavage of the glycosidic bonds between N-acetylmuramic acid and N-acetylglucosamine residues in peptidoglycan. May play a role in recycling of muropeptides during cell elongation and/or cell division. The sequence is that of Membrane-bound lytic murein transglycosylase B (mltB) from Escherichia coli (strain K12).